The following is a 749-amino-acid chain: MKKQKKILWKKGIHLAFSEKWNAGFGSFKKFYFPQNLCFLKAKLGRPVAWHRQVKHFQCNKGLHIQKTWIQDVPFCSKTKSGLATQNVSTLYPKVKRKDSKHFISSSRSLLKLQADKLLSSAKSLDHKYCREKSLLKAAPGLSANTVLGRANGHEPTTDPQASDFPMKFSGESQSPGDSGKTVVLNKHRKRVCHGCYQGLEHHRNRRPLIPKQFQLNQHRRVRASLMMYEKLSMIRFRYRIFRSQHFRTKSRVCKLRKAQRSWVQKVTGDHQENLRDNNTEGDNCNPVPSLEPKDPCRCQPYFPDMDSSAVGKGKNCHVPDGHTKENPVLDKEHGLDDTFPDQQNGCVAYNWDQSSSCPKWECTEQIHEIPLMEHPSSDKFSPETERALMALGQESGTSAVSDDREKLPVSGADKSVSSVDGPVSEEPAQNENFQMEEDGSLKQSILSSKLLDHPYCKSPLDAPLLCSEPKVENQMSGGKSSQTASPVDDEQLSTCLSGFLDEVMKKYGSLVPLSEKDVLGRLKDVFNEDFSNRKPFINREITNYRARHQKCNFRIFYNKHMLDMDDLATLDGQNWLNDQVINMYGELIMDAVPDKVHFFNSFFHRQLVTKGYNGVKRWTKKVDLFKKSLLLIPIHLEVHWSLITVTLSSRIISFYDSQGIHFKFCVENIRKYLLTEAREKNRPEFLQGWQTAVTKCIPQQKNDSDCGVFVLQYCKCLALEQPFQFSQEDMPRVRKRIYKELCECRLLD.

Over residues 268-279 (TGDHQENLRDNN) the composition is skewed to basic and acidic residues. Disordered regions lie at residues 268–288 (TGDH…CNPV) and 394–440 (QESG…EEDG). A protease region spans residues 557 to 718 (FYNKHMLDMD…VFVLQYCKCL (162 aa)). Catalysis depends on residues H640, D657, and C707.

Belongs to the peptidase C48 family. In terms of assembly, interacts with CCAR2.

The protein resides in the nucleus. It localises to the nucleolus. Protease that catalyzes two essential functions in the SUMO pathway: processing of full-length SUMO3 to its mature form and deconjugation of SUMO2 and SUMO3 from targeted proteins. Has weak proteolytic activity against full-length SUMO1 or SUMO1 conjugates. Required for cell division. This chain is Sentrin-specific protease 5 (Senp5), found in Mus musculus (Mouse).